A 132-amino-acid polypeptide reads, in one-letter code: uncharacterized protein (132 aa).

The region spanning 1–69 is the HTH merR-type domain; the sequence is MNIGEAAKKS…LDEVGKLLTL (69 aa). Residues 4–23 constitute a DNA-binding region (H-T-H motif); that stretch reads GEAAKKSGLTPKMIRYYESI.

Its subcellular location is the cytoplasm. This is an uncharacterized protein from Pseudomonas aeruginosa (strain ATCC 15692 / DSM 22644 / CIP 104116 / JCM 14847 / LMG 12228 / 1C / PRS 101 / PAO1).